The sequence spans 382 residues: GDP-mannose transporter (382 aa).

The Cytoplasmic portion of the chain corresponds to 1 to 40 (MADDKKTNEYTIEMDKLDHGNKDFEAPAPAVRPRGPPVAQ). The chain crosses the membrane as a helical span at residues 41–61 (LANNPILPVLAYCGSSILMTV). At 62–71 (MNKYVLSGRD) the chain is on the lumenal side. The chain crosses the membrane as a helical span at residues 72 to 92 (FNLNFFLLCVQSIVCIVAIQT). The Cytoplasmic portion of the chain corresponds to 93–110 (CKVSKLITYRDFNSDEAK). The helical transmembrane segment at 111–127 (KWFPITLLLIGMIYTGS) threads the bilayer. Residues 128-134 (KALQYLS) are Lumenal-facing. The chain crosses the membrane as a helical span at residues 135–151 (IPVYTIFKNLTIILIAY). The Cytoplasmic segment spans residues 152 to 160 (GEVLWFGGS). A helical transmembrane segment spans residues 161–182 (VTGLTLFSFGLMVLSSIIAAWA). The Lumenal portion of the chain corresponds to 183–200 (DIKHAVESSGDATAKVST). Residues 201–221 (LNAGYIWMLINCLCTSSYVLG) form a helical membrane-spanning segment. Residues 222 to 233 (MRKRIKLTNFKD) are Cytoplasmic-facing. Residues 234-254 (FDTMFYNNLLSIPVLLVLTFL) form a helical membrane-spanning segment. The Lumenal segment spans residues 255–274 (MEDWSSANIARNFPSTDRNG). A helical membrane pass occupies residues 275-295 (ILFAMILSGLSSVFISYTSAW). Over 296 to 303 (CVRVTSST) the chain is Cytoplasmic. A helical transmembrane segment spans residues 304 to 324 (TYSMVGALNKLPIALSGLIFF). The Lumenal portion of the chain corresponds to 325-327 (DAP). A helical transmembrane segment spans residues 328–348 (VTFPSVSAIVVGFISGIVYAV). Over 349–382 (AKIKQSAKPKTGVLPMSNPPVSASSQSMRDSLRS) the chain is Cytoplasmic. A disordered region spans residues 358 to 382 (KTGVLPMSNPPVSASSQSMRDSLRS). A compositionally biased stretch (polar residues) spans 367 to 382 (PPVSASSQSMRDSLRS).

The protein belongs to the TPT transporter family. SLC35D subfamily. In terms of assembly, homooligomer.

The protein resides in the golgi apparatus membrane. It is found in the cytoplasmic vesicle membrane. Its subcellular location is the endoplasmic reticulum membrane. Functionally, involved in the import of GDP-mannose from the cytoplasm into the Golgi lumen. This chain is GDP-mannose transporter (gmt1), found in Aspergillus fumigatus (strain CBS 144.89 / FGSC A1163 / CEA10) (Neosartorya fumigata).